Here is a 201-residue protein sequence, read N- to C-terminus: Small ribosomal subunit protein uS4c (201 aa).

The interval 20-43 is disordered; sequence GLTSKRPRAGSDLRNQSRSGKRSQ. In terms of domain architecture, S4 RNA-binding spans 89–149; that stretch reads MRLDNILFRL…DEQKSRALIQ (61 aa).

The protein belongs to the universal ribosomal protein uS4 family. As to quaternary structure, part of the 30S ribosomal subunit. Contacts protein S5. The interaction surface between S4 and S5 is involved in control of translational fidelity.

The protein localises to the plastid. It localises to the chloroplast. Functionally, one of the primary rRNA binding proteins, it binds directly to 16S rRNA where it nucleates assembly of the body of the 30S subunit. Its function is as follows. With S5 and S12 plays an important role in translational accuracy. The chain is Small ribosomal subunit protein uS4c (rps4) from Buxus microphylla (Littleleaf boxwood).